We begin with the raw amino-acid sequence, 378 residues long: Atypical chemokine receptor 2 (378 aa).

The Extracellular segment spans residues 1–49; sequence MPTVASPLPLTTVGSENSSSIYDYDYLDDMTILVCRKDEVLSFGRVFLP. Asn-17 is a glycosylation site (N-linked (GlcNAc...) asparagine). The helical transmembrane segment at 50–70 threads the bilayer; that stretch reads VVYSLIFVLGLAGNLLLLVVL. Residues 71–91 are Cytoplasmic-facing; that stretch reads LHSAPRRRTMELYLLNLAVSN. The helical transmembrane segment at 92 to 112 threads the bilayer; that stretch reads LLFVVTMPFWAISVAWHWVFG. Over 113-117 the chain is Extracellular; it reads SFLCK. Cysteines 116 and 194 form a disulfide. The helical transmembrane segment at 118 to 139 threads the bilayer; it reads VISTLYSINFYCGIFFITCMSL. Topologically, residues 140–161 are cytoplasmic; it reads DKYLEIVHAQPLHRPKAQFRNL. The helical transmembrane segment at 162-182 threads the bilayer; the sequence is LLIVMVWITSLAISVPEMVFV. The Extracellular segment spans residues 183–216; it reads QIHQTLDGVWHCYADFGGHATIWKLYLRFQLNLL. Residues 217-237 traverse the membrane as a helical segment; it reads GFLLPLLAMIFFYSRIGCVLV. Over 238 to 249 the chain is Cytoplasmic; sequence RLRPPGQGRALR. A helical membrane pass occupies residues 250 to 270; sequence MAAALVIVFFMLWFPYNLTLF. Over 271 to 292 the chain is Extracellular; the sequence is LHSLLDLHVFGNCEISHRLDYT. A helical transmembrane segment spans residues 293-313; the sequence is LQVTESLAFSHCCFTPVLYAF. Residues 314–378 are Cytoplasmic-facing; it reads CSHRFRRYLK…SLNKGEMGNT (65 aa). Positions 326–378 are C-terminal cytoplasmic tail; sequence LSVMLRWHQAPGTPSSNHSESSRVTAQEDVVSMNDLGERQSEDSLNKGEMGNT.

Belongs to the G-protein coupled receptor 1 family. Atypical chemokine receptor subfamily. In terms of processing, phosphorylated on serine residues in the C-terminal cytoplasmic tail. Expressed on apoptotic neutrophils (at protein level).

The protein resides in the early endosome. Its subcellular location is the recycling endosome. It is found in the cell membrane. Atypical chemokine receptor that controls chemokine levels and localization via high-affinity chemokine binding that is uncoupled from classic ligand-driven signal transduction cascades, resulting instead in chemokine sequestration, degradation, or transcytosis. Also known as interceptor (internalizing receptor) or chemokine-scavenging receptor or chemokine decoy receptor. Acts as a receptor for chemokines including CCL2, CCL3, CCL3L1, CCL4, CCL5, CCL7, CCL8, CCL11, CCL13, CCL17, CCL22, CCL23, CCL24, SCYA2/MCP-1, SCY3/MIP-1-alpha, SCYA5/RANTES and SCYA7/MCP-3. Upon active ligand stimulation, activates a beta-arrestin 1 (ARRB1)-dependent, G protein-independent signaling pathway that results in the phosphorylation of the actin-binding protein cofilin (CFL1) through a RAC1-PAK1-LIMK1 signaling pathway. Activation of this pathway results in up-regulation of ACKR2 from endosomal compartment to cell membrane, increasing its efficiency in chemokine uptake and degradation. By scavenging chemokines in tissues, on the surfaces of lymphatic vessels, and in placenta, plays an essential role in the resolution (termination) of the inflammatory response and in the regulation of adaptive immune responses. Plays a major role in the immune silencing of macrophages during the resolution of inflammation. Acts as a regulator of inflammatory leukocyte interactions with lymphatic endothelial cells (LECs) and is required for immature/mature dendritic cells discrimination by LECs. This is Atypical chemokine receptor 2 (Ackr2) from Mus musculus (Mouse).